The primary structure comprises 124 residues: Ribonuclease pancreatic A (124 aa).

The disordered stretch occupies residues alanine 1–asparagine 24. Residues lysine 7 and arginine 10 each coordinate substrate. The active-site Proton acceptor is the histidine 12. 4 disulfides stabilise this stretch: cysteine 26/cysteine 84, cysteine 40/cysteine 95, cysteine 58/cysteine 110, and cysteine 65/cysteine 72. Residues lysine 41–threonine 45, lysine 66, and arginine 85 each bind substrate. Histidine 119 serves as the catalytic Proton donor.

This sequence belongs to the pancreatic ribonuclease family. As to expression, pancreas.

Its subcellular location is the secreted. The catalysed reaction is an [RNA] containing cytidine + H2O = an [RNA]-3'-cytidine-3'-phosphate + a 5'-hydroxy-ribonucleotide-3'-[RNA].. It catalyses the reaction an [RNA] containing uridine + H2O = an [RNA]-3'-uridine-3'-phosphate + a 5'-hydroxy-ribonucleotide-3'-[RNA].. The protein is Ribonuclease pancreatic A of Cavia porcellus (Guinea pig).